A 57-amino-acid chain; its full sequence is Potassium channel toxin gamma-KTx 2.1 (57 aa).

Positions 1–21 are cleaved as a signal peptide; it reads MKISFVLLLTLFICSIGWSEA. Cystine bridges form between Cys-28–Cys-49, Cys-34–Cys-54, and Cys-38–Cys-56.

This sequence belongs to the short scorpion toxin superfamily. Potassium channel inhibitor family. Gamma-KTx 2 subfamily. In terms of tissue distribution, expressed by the venom gland.

The protein localises to the secreted. In terms of biological role, blocks human and/or rat Kv11.1/KCNH2/ERG1, Kv11.2/KCNH6/ERG2 and Kv11.3/KCNH7/ERG3 by binding to channel outer vestibule (S5P domain) with a 1:1 stoichiometry. Inhibition data are the following: hERG1 (reversible, Kd=7.7 nM, IC(50)=3.3 nM, IC(50)=11.9 nM), rERG1 (reversible, Kd=19 nM), hERG2 (reversible, Kd=77 nM), rERG2 (irreversible, Kd=4.2 nM), hERG3 (reversible, Kd=11.5 nM) and rERG3 (reversible, Kd=747 nM) potassium channels. Also has a minimal effect on rat ELK1/KCNH4 potassium channels (9% inhibition at 100 nM). Both this toxin and CnErgTx1 (AC Q86QT3) share mechanism of action and have overlapping binding sites on ERG1. The potency of these two toxins is not affected by elevating potassium ion concentration from 2 to 98 mM. In addition, at high toxin concentrations, block of ERG1 macroscopic currents by these two toxins is incomplete (88%). The blockade by this toxin is preferentially closed channel state-dependent, with a component of open, but not inactive state-dependent blockade. This toxin produces a concentration-dependent prolongation of QTc in the isolated rabbit heart (16.3% at 100 nM). This Mesobuthus eupeus (Lesser Asian scorpion) protein is Potassium channel toxin gamma-KTx 2.1.